Here is a 1370-residue protein sequence, read N- to C-terminus: DNA-directed RNA polymerase subunit beta (1370 aa).

Belongs to the RNA polymerase beta chain family. In terms of assembly, the RNAP catalytic core consists of 2 alpha, 1 beta, 1 beta' and 1 omega subunit. When a sigma factor is associated with the core the holoenzyme is formed, which can initiate transcription.

The catalysed reaction is RNA(n) + a ribonucleoside 5'-triphosphate = RNA(n+1) + diphosphate. In terms of biological role, DNA-dependent RNA polymerase catalyzes the transcription of DNA into RNA using the four ribonucleoside triphosphates as substrates. This chain is DNA-directed RNA polymerase subunit beta, found in Delftia acidovorans (strain DSM 14801 / SPH-1).